The sequence spans 271 residues: Elongation factor Ts (271 aa).

The involved in Mg(2+) ion dislocation from EF-Tu stretch occupies residues threonine 76–valine 79.

Belongs to the EF-Ts family.

It is found in the cytoplasm. Its function is as follows. Associates with the EF-Tu.GDP complex and induces the exchange of GDP to GTP. It remains bound to the aminoacyl-tRNA.EF-Tu.GTP complex up to the GTP hydrolysis stage on the ribosome. This Mycolicibacterium gilvum (strain PYR-GCK) (Mycobacterium gilvum (strain PYR-GCK)) protein is Elongation factor Ts.